Consider the following 155-residue polypeptide: uncharacterized protein (155 aa).

Positions 1 to 24 are cleaved as a signal peptide; it reads MQQLSKRRLSALFVTAFLPVTAFA.

This is an uncharacterized protein from Chromohalobacter salexigens (strain ATCC BAA-138 / DSM 3043 / CIP 106854 / NCIMB 13768 / 1H11).